Consider the following 450-residue polypeptide: 5-amino-6-(D-ribitylamino)uracil--L-tyrosine 4-hydroxyphenyl transferase (450 aa).

A disordered region spans residues 1–24 (MPDVPETVGTPDGSTEFEHRPTTD). The region spanning 82–350 (VTFVANLNNN…MIAVSRLFLD (269 aa)) is the Radical SAM core domain. [4Fe-4S] cluster-binding residues include cysteine 96, cysteine 100, and cysteine 103. The interval 430 to 450 (PDADVLGPQLGPRADGTPLLD) is disordered.

The protein belongs to the radical SAM superfamily. CofH family. As to quaternary structure, consists of two subunits, CofG and CofH. [4Fe-4S] cluster is required as a cofactor.

It carries out the reaction 5-amino-6-(D-ribitylamino)uracil + L-tyrosine + S-adenosyl-L-methionine = 5-amino-5-(4-hydroxybenzyl)-6-(D-ribitylimino)-5,6-dihydrouracil + 2-iminoacetate + 5'-deoxyadenosine + L-methionine + H(+). Its pathway is cofactor biosynthesis; coenzyme F0 biosynthesis. In terms of biological role, catalyzes the radical-mediated synthesis of 5-amino-5-(4-hydroxybenzyl)-6-(D-ribitylimino)-5,6-dihydrouracil from 5-amino-6-(D-ribitylamino)uracil and L-tyrosine. In Haloarcula marismortui (strain ATCC 43049 / DSM 3752 / JCM 8966 / VKM B-1809) (Halobacterium marismortui), this protein is 5-amino-6-(D-ribitylamino)uracil--L-tyrosine 4-hydroxyphenyl transferase.